We begin with the raw amino-acid sequence, 60 residues long: Large ribosomal subunit protein bL32 (60 aa).

This sequence belongs to the bacterial ribosomal protein bL32 family.

The sequence is that of Large ribosomal subunit protein bL32 from Streptococcus sanguinis (strain SK36).